We begin with the raw amino-acid sequence, 959 residues long: DNA translocase FtsK 1 (959 aa).

Helical transmembrane passes span 1 to 21 (MGLGWFGISSVWLLPMVWRYV), 39 to 59 (IWLATLAVLCASASLEALTSG), and 83 to 103 (GWTGAFLLMLGVLLWVAPMVF). Residues 104–959 (GHSWRQLLAR…REVIAPGGGD (856 aa)) are Cytoplasmic-facing. The tract at residues 122–427 (PVQADARHDE…AAPPPPAVPA (306 aa)) is disordered. The span at 126–136 (DARHDEADDGL) shows a compositional bias: basic and acidic residues. 2 stretches are compositionally biased toward low complexity: residues 220-229 (ATPKAATQAP) and 264-286 (APSAPVEDAAPAISPAAEPDAPA). Residues 287–298 (SAPPEPAEPSPP) show a composition bias toward pro residues. Residues 333-379 (PEPEPEPEAETEVTPEAEAEPEAEPEAEAEPEAEAEAEAEAEAEPEA) are compositionally biased toward acidic residues. The span at 380-403 (EAPAPESVAPALQEAEAATAAEAP) shows a compositional bias: low complexity. Residues 605-814 (GNPVVTDLAR…FQVSSKIDSR (210 aa)) form the FtsK domain. 625–630 (GSGKSV) contacts ATP.

Belongs to the FtsK/SpoIIIE/SftA family. Homohexamer. Forms a ring that surrounds DNA.

Its subcellular location is the cell inner membrane. Its function is as follows. Essential cell division protein that coordinates cell division and chromosome segregation. The N-terminus is involved in assembly of the cell-division machinery. The C-terminus functions as a DNA motor that moves dsDNA in an ATP-dependent manner towards the dif recombination site, which is located within the replication terminus region. Translocation stops specifically at Xer-dif sites, where FtsK interacts with the Xer recombinase, allowing activation of chromosome unlinking by recombination. FtsK orienting polar sequences (KOPS) guide the direction of DNA translocation. FtsK can remove proteins from DNA as it translocates, but translocation stops specifically at XerCD-dif site, thereby preventing removal of XerC and XerD from dif. The chain is DNA translocase FtsK 1 (ftsK1) from Ralstonia nicotianae (strain ATCC BAA-1114 / GMI1000) (Ralstonia solanacearum).